The primary structure comprises 242 residues: Biosynthetic peptidoglycan transglycosylase (242 aa).

A helical membrane pass occupies residues 19–39; sequence LMVVLAIFWGGGIALFSVAPV.

Belongs to the glycosyltransferase 51 family.

The protein localises to the cell inner membrane. It carries out the reaction [GlcNAc-(1-&gt;4)-Mur2Ac(oyl-L-Ala-gamma-D-Glu-L-Lys-D-Ala-D-Ala)](n)-di-trans,octa-cis-undecaprenyl diphosphate + beta-D-GlcNAc-(1-&gt;4)-Mur2Ac(oyl-L-Ala-gamma-D-Glu-L-Lys-D-Ala-D-Ala)-di-trans,octa-cis-undecaprenyl diphosphate = [GlcNAc-(1-&gt;4)-Mur2Ac(oyl-L-Ala-gamma-D-Glu-L-Lys-D-Ala-D-Ala)](n+1)-di-trans,octa-cis-undecaprenyl diphosphate + di-trans,octa-cis-undecaprenyl diphosphate + H(+). Its pathway is cell wall biogenesis; peptidoglycan biosynthesis. In terms of biological role, peptidoglycan polymerase that catalyzes glycan chain elongation from lipid-linked precursors. In Escherichia coli O81 (strain ED1a), this protein is Biosynthetic peptidoglycan transglycosylase.